The following is a 383-amino-acid chain: Dual-specificity RNA methyltransferase RlmN (383 aa).

Residue Glu-95 is the Proton acceptor of the active site. The Radical SAM core domain maps to 101–349 (EETRGTLCVS…TTVRKTRGDD (249 aa)). Cys-108 and Cys-354 are joined by a disulfide. [4Fe-4S] cluster is bound by residues Cys-115, Cys-119, and Cys-122. S-adenosyl-L-methionine is bound by residues 180–181 (GE), Ser-212, 234–236 (SLH), and Asn-311. Catalysis depends on Cys-354, which acts as the S-methylcysteine intermediate.

This sequence belongs to the radical SAM superfamily. RlmN family. The cofactor is [4Fe-4S] cluster.

It is found in the cytoplasm. It catalyses the reaction adenosine(2503) in 23S rRNA + 2 reduced [2Fe-2S]-[ferredoxin] + 2 S-adenosyl-L-methionine = 2-methyladenosine(2503) in 23S rRNA + 5'-deoxyadenosine + L-methionine + 2 oxidized [2Fe-2S]-[ferredoxin] + S-adenosyl-L-homocysteine. It carries out the reaction adenosine(37) in tRNA + 2 reduced [2Fe-2S]-[ferredoxin] + 2 S-adenosyl-L-methionine = 2-methyladenosine(37) in tRNA + 5'-deoxyadenosine + L-methionine + 2 oxidized [2Fe-2S]-[ferredoxin] + S-adenosyl-L-homocysteine. Specifically methylates position 2 of adenine 2503 in 23S rRNA and position 2 of adenine 37 in tRNAs. m2A2503 modification seems to play a crucial role in the proofreading step occurring at the peptidyl transferase center and thus would serve to optimize ribosomal fidelity. The protein is Dual-specificity RNA methyltransferase RlmN of Paraburkholderia xenovorans (strain LB400).